We begin with the raw amino-acid sequence, 89 residues long: Small ribosomal subunit protein uS14A (89 aa).

It belongs to the universal ribosomal protein uS14 family. In terms of assembly, part of the 30S ribosomal subunit. Contacts proteins S3 and S10.

Its function is as follows. Binds 16S rRNA, required for the assembly of 30S particles and may also be responsible for determining the conformation of the 16S rRNA at the A site. In Lacticaseibacillus paracasei (strain ATCC 334 / BCRC 17002 / CCUG 31169 / CIP 107868 / KCTC 3260 / NRRL B-441) (Lactobacillus paracasei), this protein is Small ribosomal subunit protein uS14A.